Here is a 211-residue protein sequence, read N- to C-terminus: MFSTFLTALRTCVVTMVLTGLLYPLAVTGLAQLLFPGEANGSWVKDGRGRVVGSALIGQGFTRAGYFHPRPSAAGAGYDGAASSGSNLGPTSLKLKERAAAELERLRRENPDAAGPVPAELVTTSASGLDPHLSPEAARWQAARVARARGVALERVLDVVDARVEGRTFGVLGEPRVNVLLLNLALDRRFGPLPDAAPGVGGRASPGQGAP.

A helical transmembrane segment spans residues 13 to 35 (VVTMVLTGLLYPLAVTGLAQLLF).

This sequence belongs to the KdpC family. As to quaternary structure, the system is composed of three essential subunits: KdpA, KdpB and KdpC.

It is found in the cell inner membrane. Functionally, part of the high-affinity ATP-driven potassium transport (or Kdp) system, which catalyzes the hydrolysis of ATP coupled with the electrogenic transport of potassium into the cytoplasm. This subunit acts as a catalytic chaperone that increases the ATP-binding affinity of the ATP-hydrolyzing subunit KdpB by the formation of a transient KdpB/KdpC/ATP ternary complex. This Myxococcus xanthus (strain DK1622) protein is Potassium-transporting ATPase KdpC subunit.